Here is a 118-residue protein sequence, read N- to C-terminus: Large ribosomal subunit protein bL19 (118 aa).

It belongs to the bacterial ribosomal protein bL19 family.

Its function is as follows. This protein is located at the 30S-50S ribosomal subunit interface and may play a role in the structure and function of the aminoacyl-tRNA binding site. This chain is Large ribosomal subunit protein bL19 (rplS), found in Helicobacter pylori (strain J99 / ATCC 700824) (Campylobacter pylori J99).